A 170-amino-acid chain; its full sequence is uncharacterized protein (170 aa).

This is an uncharacterized protein from Homo sapiens (Human).